A 625-amino-acid chain; its full sequence is Somatic embryogenesis receptor kinase 1 (625 aa).

Positions 1-26 are cleaved as a signal peptide; the sequence is MESSYVVFILLSLILLPNHSLWLASA. The Extracellular segment spans residues 27–238; that stretch reads NLEGDALHTL…STPSGYGITG (212 aa). A disulfide bridge links Cys-58 with Cys-65. 2 leucine-rich repeat receptor-like protein kinase binding regions span residues 59–78 and 97–102; these read TWFH…DLGN and YLELYS. Position 61–62 (61–62) interacts with brassinolide; the sequence is FH. 4 LRR repeats span residues 92 to 116, 118 to 140, 141 to 164, and 165 to 189; these read LKNL…LGNL, NLVS…LGKL, SKLR…LTNI, and TTLQ…SFSL. 2 N-linked (GlcNAc...) asparagine glycosylation sites follow: Asn-104 and Asn-115. Leucine-rich repeat receptor-like protein kinase binding regions lie at residues 123–126 and 145–147; these read DLYL and FLR. Asn-150, Asn-163, and Asn-184 each carry an N-linked (GlcNAc...) asparagine glycan. The tract at residues 171-194 is leucine-rich repeat receptor-like protein kinase binding; sequence DLSNNRLSGSVPDNGSFSLFTPIS. The cysteines at positions 202 and 210 are disulfide-linked. Residues 239 to 259 traverse the membrane as a helical segment; that stretch reads AIAGGVAAGAALLFAAPAIAF. Residues 260 to 625 lie on the Cytoplasmic side of the membrane; that stretch reads AWWRRRKPLD…LHAVELSGPR (366 aa). Phosphoserine occurs at positions 291, 299, and 303. A Protein kinase domain is found at 302–589; the sequence is FSNKNILGRG…GLAEKWDEWQ (288 aa). ATP is bound at residue 308–316; it reads LGRGGFGKV. Position 325 is a phosphothreonine (Thr-325). Lys-330 contributes to the ATP binding site. 2 positions are modified to phosphothreonine: Thr-337 and Thr-346. Phosphoserine occurs at positions 352, 383, 386, and 394. Phosphothreonine is present on Thr-402. Position 415 is a phosphoserine (Ser-415). The Proton acceptor role is filled by Asp-429. The residue at position 456 (Tyr-456) is a Phosphotyrosine. Thr-459, Thr-462, Thr-463, and Thr-468 each carry phosphothreonine. Tyr-476 carries the post-translational modification Phosphotyrosine. Ser-478 is modified (phosphoserine). Thr-479 is modified (phosphothreonine). Ser-483 carries the post-translational modification Phosphoserine. Phosphothreonine is present on Thr-541. Tyr-543 is subject to Phosphotyrosine. At Thr-559 the chain carries Phosphothreonine. 2 positions are modified to phosphoserine: Ser-606 and Ser-612. A Phosphothreonine modification is found at Thr-613. Phosphotyrosine is present on Tyr-614. Phosphoserine is present on Ser-622.

This sequence belongs to the protein kinase superfamily. Ser/Thr protein kinase family. Monomer, homo- and heterodimer. Interacts with KAPP, CDC48A, GRF6 or GRF7, SERK2, BRI1 and SERK3/BAK1 to form the SERK1 signaling complex. Bind to BRI1 in a brassinolide-dependent manner. Heterodimer with PSKR1. Interacts with the EF-Tu receptor EFR and FLS2 in a specific ligand-induced manner. Interacts with ERECTA in a EPF2-induced manner. Interacts with ERL1 in a EPF1-induced manner. Interacts with TMM. In the presence of the signal peptide RGF1, interacts with RGI1/RGFR4/RCH2, RGI2/RGFR3/RCH1, RGI3/RGFR1, RGI4/RGFR2/SKM2 and RGI5/RGFR5. It depends on Mg(2+) as a cofactor. Glycosylated. Important for targeting to the plasma membrane. Post-translationally, intermolecular autophosphorylation. The catalytic activity of SERK1 depends on the presence of a phosphorylated Thr residue in SERK1. The phosphorylation is induced by brassinosteroids. Transphosphorylation by BRI1 occurs only on Ser-299 and Thr-462. Dephosphorylation of threonine residues by the kinase-associated protein phosphatase (KAPP) is involved in SERK1 endocytosis. In terms of tissue distribution, expressed in flowers, tapetum, developing microspores, all cells of the embryo sac, provascular strands and developing vascular bundles. Low expression in adult vascular tissue. Detected in root meristem.

The protein resides in the cell membrane. It localises to the endoplasmic reticulum membrane. It carries out the reaction L-seryl-[protein] + ATP = O-phospho-L-seryl-[protein] + ADP + H(+). It catalyses the reaction L-threonyl-[protein] + ATP = O-phospho-L-threonyl-[protein] + ADP + H(+). The catalysed reaction is L-tyrosyl-[protein] + ATP = O-phospho-L-tyrosyl-[protein] + ADP + H(+). Inhibited by manganese. Functionally, dual specificity kinase acting on both serine/threonine- and tyrosine-containing substrates. Phosphorylates BRI1 on 'Ser-887' and CDC48 on at least one threonine residue and on 'Ser-41'. Confers embryogenic competence. Acts redundantly with SERK2 as a control point for sporophytic development controlling male gametophyte production. Involved in the brassinolide signaling pathway. Probably required during small peptide (e.g. RGF1) signaling. Involved in the perception of phytosulfokine and subsequent signal transduction. Acts as a RLK5 coreceptor and promotes high-affinity IDA sensing, thus being a positive regulator of floral abscission. This chain is Somatic embryogenesis receptor kinase 1, found in Arabidopsis thaliana (Mouse-ear cress).